The following is a 446-amino-acid chain: Exodeoxyribonuclease 7 large subunit (446 aa).

This sequence belongs to the XseA family. In terms of assembly, heterooligomer composed of large and small subunits.

The protein resides in the cytoplasm. The catalysed reaction is Exonucleolytic cleavage in either 5'- to 3'- or 3'- to 5'-direction to yield nucleoside 5'-phosphates.. In terms of biological role, bidirectionally degrades single-stranded DNA into large acid-insoluble oligonucleotides, which are then degraded further into small acid-soluble oligonucleotides. The sequence is that of Exodeoxyribonuclease 7 large subunit from Streptococcus agalactiae serotype III (strain NEM316).